The following is a 614-amino-acid chain: 4-hydroxy-3-methylbut-2-en-1-yl diphosphate synthase (flavodoxin) (614 aa).

Cys-522, Cys-525, Cys-556, and Glu-563 together coordinate [4Fe-4S] cluster.

The protein belongs to the IspG family. [4Fe-4S] cluster is required as a cofactor.

It catalyses the reaction (2E)-4-hydroxy-3-methylbut-2-enyl diphosphate + oxidized [flavodoxin] + H2O + 2 H(+) = 2-C-methyl-D-erythritol 2,4-cyclic diphosphate + reduced [flavodoxin]. It functions in the pathway isoprenoid biosynthesis; isopentenyl diphosphate biosynthesis via DXP pathway; isopentenyl diphosphate from 1-deoxy-D-xylulose 5-phosphate: step 5/6. In terms of biological role, converts 2C-methyl-D-erythritol 2,4-cyclodiphosphate (ME-2,4cPP) into 1-hydroxy-2-methyl-2-(E)-butenyl 4-diphosphate. The polypeptide is 4-hydroxy-3-methylbut-2-en-1-yl diphosphate synthase (flavodoxin) (Phocaeicola vulgatus (strain ATCC 8482 / DSM 1447 / JCM 5826 / CCUG 4940 / NBRC 14291 / NCTC 11154) (Bacteroides vulgatus)).